An 882-amino-acid polypeptide reads, in one-letter code: Translation initiation factor IF-2 (882 aa).

Positions 50–299 are disordered; it reads SFKSANTTKP…KERPLPETLV (250 aa). 2 stretches are compositionally biased toward basic and acidic residues: residues 60-71 and 84-96; these read STEKDSKNSSRK and RRRD…DNRH. Over residues 97–108 the composition is skewed to basic residues; the sequence is GNNKRRNNKFKK. Basic and acidic residues-rich tracts occupy residues 109–133, 169–183, 232–242, and 250–263; these read QQND…DLLN, KKVE…EKLE, QKEETKPTRKK, and EVPD…EHSD. The span at 264 to 277 shows a compositional bias: basic residues; the sequence is KARRRRNKKNKRIN. A compositionally biased stretch (basic and acidic residues) spans 278 to 294; that stretch reads QSKEIKKQPTQRKERPL. Residues 383 to 552 enclose the tr-type G domain; sequence KRPPVVTIMG…LLQADVMELK (170 aa). The interval 392–399 is G1; it reads GHVDHGKT. 392-399 serves as a coordination point for GTP; sequence GHVDHGKT. A G2 region spans residues 417 to 421; it reads GITQK. The interval 438–441 is G3; that stretch reads DTPG. GTP contacts are provided by residues 438–442 and 492–495; these read DTPGH and NKID. A G4 region spans residues 492–495; it reads NKID. A G5 region spans residues 528–530; the sequence is SAK.

This sequence belongs to the TRAFAC class translation factor GTPase superfamily. Classic translation factor GTPase family. IF-2 subfamily.

It is found in the cytoplasm. In terms of biological role, one of the essential components for the initiation of protein synthesis. Protects formylmethionyl-tRNA from spontaneous hydrolysis and promotes its binding to the 30S ribosomal subunits. Also involved in the hydrolysis of GTP during the formation of the 70S ribosomal complex. The sequence is that of Translation initiation factor IF-2 from Lactobacillus gasseri (strain ATCC 33323 / DSM 20243 / BCRC 14619 / CIP 102991 / JCM 1131 / KCTC 3163 / NCIMB 11718 / NCTC 13722 / AM63).